Reading from the N-terminus, the 74-residue chain is Small ribosomal subunit protein uS8c (74 aa).

The protein belongs to the universal ribosomal protein uS8 family. In terms of assembly, part of the 30S ribosomal subunit.

It localises to the plastid. It is found in the chloroplast. Its function is as follows. One of the primary rRNA binding proteins, it binds directly to 16S rRNA central domain where it helps coordinate assembly of the platform of the 30S subunit. The sequence is that of Small ribosomal subunit protein uS8c (rps8) from Oenothera ammophila (Evening primerose).